A 211-amino-acid chain; its full sequence is Ras-related protein RABB1c (211 aa).

Serine 2 carries the N-acetylserine modification. Position 13–21 (13–21) interacts with GTP; it reads GDTGVGKSC. The Effector region motif lies at 35–43; that stretch reads HDLTIGVEF. Residues 61–65, 119–122, and 149–151 contribute to the GTP site; these read DTAGQ, NKCD, and SAK. 2 S-geranylgeranyl cysteine lipidation sites follow: cysteine 209 and cysteine 210.

It belongs to the small GTPase superfamily. Rab family.

The protein resides in the cell membrane. Functionally, intracellular vesicle trafficking and protein transport. This Arabidopsis thaliana (Mouse-ear cress) protein is Ras-related protein RABB1c (RABB1C).